A 190-amino-acid polypeptide reads, in one-letter code: Xanthine phosphoribosyltransferase (190 aa).

2 residues coordinate xanthine: L20 and N27. 5-phospho-alpha-D-ribose 1-diphosphate is bound at residue A128 to A132. K156 serves as a coordination point for xanthine.

It belongs to the purine/pyrimidine phosphoribosyltransferase family. Xpt subfamily. Homodimer.

Its subcellular location is the cytoplasm. It catalyses the reaction XMP + diphosphate = xanthine + 5-phospho-alpha-D-ribose 1-diphosphate. Its pathway is purine metabolism; XMP biosynthesis via salvage pathway; XMP from xanthine: step 1/1. Functionally, converts the preformed base xanthine, a product of nucleic acid breakdown, to xanthosine 5'-monophosphate (XMP), so it can be reused for RNA or DNA synthesis. The chain is Xanthine phosphoribosyltransferase from Ectopseudomonas mendocina (strain ymp) (Pseudomonas mendocina).